The primary structure comprises 158 residues: 6,7-dimethyl-8-ribityllumazine synthase (158 aa).

Residues Phe23, 61–63 (SFE), and 85–87 (AVI) contribute to the 5-amino-6-(D-ribitylamino)uracil site. A (2S)-2-hydroxy-3-oxobutyl phosphate-binding site is contributed by 90-91 (DT). Catalysis depends on His93, which acts as the Proton donor. Position 118 (Phe118) interacts with 5-amino-6-(D-ribitylamino)uracil. Arg132 lines the (2S)-2-hydroxy-3-oxobutyl phosphate pocket.

Belongs to the DMRL synthase family.

The enzyme catalyses (2S)-2-hydroxy-3-oxobutyl phosphate + 5-amino-6-(D-ribitylamino)uracil = 6,7-dimethyl-8-(1-D-ribityl)lumazine + phosphate + 2 H2O + H(+). It participates in cofactor biosynthesis; riboflavin biosynthesis; riboflavin from 2-hydroxy-3-oxobutyl phosphate and 5-amino-6-(D-ribitylamino)uracil: step 1/2. Functionally, catalyzes the formation of 6,7-dimethyl-8-ribityllumazine by condensation of 5-amino-6-(D-ribitylamino)uracil with 3,4-dihydroxy-2-butanone 4-phosphate. This is the penultimate step in the biosynthesis of riboflavin. This chain is 6,7-dimethyl-8-ribityllumazine synthase, found in Prochlorococcus marinus (strain NATL2A).